The sequence spans 301 residues: Ornithine carbamoyltransferase (301 aa).

Carbamoyl phosphate is bound by residues Arg-107 and 134–137; that span reads HPLQ. L-ornithine contacts are provided by residues Asn-165, Asp-220, and 224 to 225; that span reads SM. Carbamoyl phosphate contacts are provided by residues 260–261 and Arg-288; that span reads CL.

Belongs to the aspartate/ornithine carbamoyltransferase superfamily. OTCase family. As to quaternary structure, homotrimer.

It is found in the cytoplasm. The catalysed reaction is carbamoyl phosphate + L-ornithine = L-citrulline + phosphate + H(+). It functions in the pathway amino-acid biosynthesis; L-arginine biosynthesis; L-arginine from L-ornithine and carbamoyl phosphate: step 1/3. Its activity is regulated as follows. Inhibited by delta-N-phosphonoacetyl-L-ornithine. Its function is as follows. Reversibly catalyzes the transfer of the carbamoyl group from carbamoyl phosphate (CP) to the N(epsilon) atom of ornithine (ORN) to produce L-citrulline, which is a substrate for argininosuccinate synthetase, the enzyme involved in the final step in arginine biosynthesis. The chain is Ornithine carbamoyltransferase from Thermus thermophilus (strain ATCC BAA-163 / DSM 7039 / HB27).